The primary structure comprises 136 residues: Large ribosomal subunit protein uL16 (136 aa).

The protein belongs to the universal ribosomal protein uL16 family. As to quaternary structure, part of the 50S ribosomal subunit.

In terms of biological role, binds 23S rRNA and is also seen to make contacts with the A and possibly P site tRNAs. The sequence is that of Large ribosomal subunit protein uL16 from Shewanella piezotolerans (strain WP3 / JCM 13877).